Reading from the N-terminus, the 403-residue chain is Glycerophosphocholine acyltransferase 1 (403 aa).

Residues 1-112 (MDHLEFDENT…SGKVVRFRDK (112 aa)) lie on the Cytoplasmic side of the membrane. The chain crosses the membrane as a helical span at residues 113-133 (LSFALGVSTCILTALLVGMAP). The Lumenal portion of the chain corresponds to 134 to 137 (ESMH). Residues 138–155 (LWYTIQLFVYLPLRYYTY) form a helical membrane-spanning segment. The Cytoplasmic portion of the chain corresponds to 156–161 (QRKGYE). The chain crosses the membrane as a helical span at residues 162 to 182 (YFIADFCYWGNILLLVYIWIF). Over 183–186 (PESR) the chain is Lumenal. A helical transmembrane segment spans residues 187-207 (RLFILSYSISYGTLAWSVVAW). Over 208-218 (RNSLLFHSIDK) the chain is Cytoplasmic. The helical transmembrane segment at 219–239 (ITSLFIHFFPPLVLHTIVHLT) threads the bilayer. N-linked (GlcNAc...) asparagine glycosylation occurs at Asn240. Over 240 to 262 (NKSYLKDRFPAVLKVKKIDLLSS) the chain is Lumenal. Residues 263-283 (VEIASFFYALWQIWYYFFIQV) traverse the membrane as a helical segment. The Cytoplasmic portion of the chain corresponds to 284-322 (GKQKQIQEGRPTSFTWLSKAYSKTKLGRAVAKLPQNLQP). The chain crosses the membrane as a helical span at residues 323–343 (FVFMIIQYLYSITTMLPCSLW). The Lumenal portion of the chain corresponds to 344–352 (YNNKLYSTA). Residues 353–373 (FLALIFGWSVWNGASYYIDVF) form a helical membrane-spanning segment. Residues 374–403 (GRRFQKELEALRQQLAETPTNSGSSSALSR) lie on the Cytoplasmic side of the membrane.

It belongs to the GPC1 family.

It localises to the endoplasmic reticulum membrane. The protein resides in the golgi apparatus membrane. The catalysed reaction is sn-glycerol 3-phosphocholine + an acyl-CoA = a 1-acyl-sn-glycero-3-phosphocholine + CoA. It carries out the reaction sn-glycero-3-phosphoethanolamine + an acyl-CoA = a monoacyl-sn-glycero-3-phosphoethanolamine + CoA. It catalyses the reaction sn-glycero-3-phosphoethanolamine + (9Z)-octadecenoyl-CoA = (9Z-octadecenoyl)-sn-glycero-3-phosphoethanolamine + CoA. In terms of biological role, glycerophosphocholine acyltransferase (GPCAT) that utilizes acyl-CoA to acylate glycero-3-phosphocholine (GPC), forming lysophosphatidylcholine (LPC). Shows broad acyl specificities with a preference for 16:0-CoA, polyunsaturated acyl-CoA, and the hydroxylated ricinoleoyl-CoA. Also catalyzes the acylation of glycero-3-phosphoethanolamine (GPE) with acyl-CoA. In addition to acyl-CoA, GPCAT efficiently utilizes LPC and lysophosphatidylethanolamine (LPE) as acyl donors in the acylation of GPC. Contributes to the maintenance of phosphatidylcholine (PC) homeostasis and might also have specific functions in acyl editing of PC, such as transferring acyl groups modified at the sn-2 position of PC to the sn-1. The protein is Glycerophosphocholine acyltransferase 1 of Schizosaccharomyces pombe (strain 972 / ATCC 24843) (Fission yeast).